Reading from the N-terminus, the 288-residue chain is Fructose-bisphosphate aldolase (288 aa).

D-glyceraldehyde 3-phosphate is bound at residue Ser49. Asp84 (proton donor) is an active-site residue. Positions 85, 105, 135, and 177 each coordinate Zn(2+). Residue Gly178 coordinates dihydroxyacetone phosphate. Residue His206 participates in Zn(2+) binding. Dihydroxyacetone phosphate contacts are provided by residues Gly207 to Ser209 and Asn228 to Thr231.

This sequence belongs to the class II fructose-bisphosphate aldolase family. In terms of assembly, homodimer. Requires Zn(2+) as cofactor.

It carries out the reaction beta-D-fructose 1,6-bisphosphate = D-glyceraldehyde 3-phosphate + dihydroxyacetone phosphate. It functions in the pathway carbohydrate degradation; glycolysis; D-glyceraldehyde 3-phosphate and glycerone phosphate from D-glucose: step 4/4. Functionally, catalyzes the aldol condensation of dihydroxyacetone phosphate (DHAP or glycerone-phosphate) with glyceraldehyde 3-phosphate (G3P) to form fructose 1,6-bisphosphate (FBP) in gluconeogenesis and the reverse reaction in glycolysis. This chain is Fructose-bisphosphate aldolase (fba), found in Mycoplasma genitalium (strain ATCC 33530 / DSM 19775 / NCTC 10195 / G37) (Mycoplasmoides genitalium).